The sequence spans 339 residues: MVVTAAGSAEEAVRRWVDAAGGRLVLDGGLATELEANGADLNDPLWSAKCLLSSPHLIRKVHMDYLEAGANIIITASYQATIQGFESKGFSKEQSENLLTKSVEIALEAREMFLKEHLEKSTPIQHPVLVAASLGSYGAYLADGSEYSGDYGEAGTKEFLKDFHRRRLQVLAEAGPDLIAFETIPNKLEAEAYVELLEECNINIPAWFSFNSKDGVHIVSGDSLIECTTIADKCAKVGAVGINCTPPRFIHGLILSIRKVTDKPILIYPNSGERYDGEKKEWVESTGVSDGDFVSYVNEWCKDGAVLIGGCCRTTPNTIRAIHRTLNKSPNKQQLPAVE.

The Hcy-binding domain occupies 12–326 (AVRRWVDAAG…NTIRAIHRTL (315 aa)). Zn(2+)-binding residues include Cys-244, Cys-311, and Cys-312.

In terms of assembly, monomer. Zn(2+) is required as a cofactor.

It carries out the reaction S-methyl-L-methionine + L-homocysteine = 2 L-methionine + H(+). Functionally, catalyzes methyl transfer from S-methylmethionine (SMM) to adenosyl-L-homocysteine (AdoMet). SMM degradation (by HMT-1, HMT-2, HMT-3 and HMT-4) and biosynthesis (by MMT1) constitute the SMM cycle in plants, which is probably required to achieve short term control of AdoMet level. This is Homocysteine S-methyltransferase 2 (HMT-2) from Zea mays (Maize).